Consider the following 330-residue polypeptide: Methionyl-tRNA formyltransferase (330 aa).

121–124 (SLLP) provides a ligand contact to (6S)-5,6,7,8-tetrahydrofolate.

It belongs to the Fmt family.

It carries out the reaction L-methionyl-tRNA(fMet) + (6R)-10-formyltetrahydrofolate = N-formyl-L-methionyl-tRNA(fMet) + (6S)-5,6,7,8-tetrahydrofolate + H(+). In terms of biological role, attaches a formyl group to the free amino group of methionyl-tRNA(fMet). The formyl group appears to play a dual role in the initiator identity of N-formylmethionyl-tRNA by promoting its recognition by IF2 and preventing the misappropriation of this tRNA by the elongation apparatus. The chain is Methionyl-tRNA formyltransferase from Burkholderia orbicola (strain MC0-3).